A 317-amino-acid polypeptide reads, in one-letter code: Peroxidase 64 (317 aa).

The N-terminal stretch at 1–22 is a signal peptide; that stretch reads MNAHMLNLLVIVIFVVSFDVQA. 4 disulfide bridges follow: Cys-32/Cys-111, Cys-65/Cys-70, Cys-117/Cys-313, and Cys-195/Cys-227. His-63 (proton acceptor) is an active-site residue. Residues Asp-64, Val-67, Gly-69, Asp-71, and Ser-73 each contribute to the Ca(2+) site. Pro-158 is a substrate binding site. Asn-163 carries an N-linked (GlcNAc...) asparagine glycan. His-188 lines the heme b pocket. Position 189 (Thr-189) interacts with Ca(2+). Positions 241, 243, and 248 each coordinate Ca(2+).

It belongs to the peroxidase family. Classical plant (class III) peroxidase subfamily. Heme b is required as a cofactor. Ca(2+) serves as cofactor. In terms of tissue distribution, expressed in the whole plant, but preferentially in roots.

Its subcellular location is the secreted. The enzyme catalyses 2 a phenolic donor + H2O2 = 2 a phenolic radical donor + 2 H2O. In terms of biological role, removal of H(2)O(2), oxidation of toxic reductants, biosynthesis and degradation of lignin, suberization, auxin catabolism, response to environmental stresses such as wounding, pathogen attack and oxidative stress. These functions might be dependent on each isozyme/isoform in each plant tissue. The chain is Peroxidase 64 (PER64) from Arabidopsis thaliana (Mouse-ear cress).